The sequence spans 300 residues: UDP-3-O-acyl-N-acetylglucosamine deacetylase (300 aa).

His76, His235, and Asp239 together coordinate Zn(2+). His262 functions as the Proton donor in the catalytic mechanism.

It belongs to the LpxC family. Zn(2+) is required as a cofactor.

It catalyses the reaction a UDP-3-O-[(3R)-3-hydroxyacyl]-N-acetyl-alpha-D-glucosamine + H2O = a UDP-3-O-[(3R)-3-hydroxyacyl]-alpha-D-glucosamine + acetate. It participates in glycolipid biosynthesis; lipid IV(A) biosynthesis; lipid IV(A) from (3R)-3-hydroxytetradecanoyl-[acyl-carrier-protein] and UDP-N-acetyl-alpha-D-glucosamine: step 2/6. Its function is as follows. Catalyzes the hydrolysis of UDP-3-O-myristoyl-N-acetylglucosamine to form UDP-3-O-myristoylglucosamine and acetate, the committed step in lipid A biosynthesis. The polypeptide is UDP-3-O-acyl-N-acetylglucosamine deacetylase (Halorhodospira halophila (strain DSM 244 / SL1) (Ectothiorhodospira halophila (strain DSM 244 / SL1))).